Consider the following 342-residue polypeptide: Prenyl transferase ptmC (342 aa).

Residues 17–37 traverse the membrane as a helical segment; the sequence is LSFLTLTVGALALIVVLYISI. Histidine 110 lines the isopentenyl diphosphate pocket. Mg(2+)-binding residues include aspartate 117 and aspartate 121. Arginine 126 contributes to the dimethylallyl diphosphate binding site. Asparagine 154 is a glycosylation site (N-linked (GlcNAc...) asparagine). Dimethylallyl diphosphate is bound by residues lysine 210, threonine 211, glutamine 240, asparagine 247, and lysine 257.

Belongs to the FPP/GGPP synthase family.

The protein localises to the membrane. The protein operates within secondary metabolite biosynthesis. Prenyl transferase; part of the gene cluster that mediates the biosynthesis of the indole diterpenes penitrems. The geranylgeranyl diphosphate (GGPP) synthase ptmG catalyzes the first step in penitrem biosynthesis via conversion of farnesyl pyrophosphate and isopentyl pyrophosphate into geranylgeranyl pyrophosphate (GGPP). Condensation of indole-3-glycerol phosphate with GGPP by the prenyl transferase ptmC then forms 3-geranylgeranylindole (3-GGI). Epoxidation by the FAD-dependent monooxygenase ptmM leads to a epoxidized-GGI that is substrate of the terpene cyclase ptmB for cyclization to yield paspaline. Paspaline is subsequently converted to 13-desoxypaxilline by the cytochrome P450 monooxygenase ptmP, the latter being then converted to paxilline by the cytochrome P450 monooxygenase ptmQ. Paxilline is converted to beta-paxitriol via C-10 ketoreduction by the short-chain dehydrogenase ptmH which can be monoprenylated at the C-20 by the indole diterpene prenyltransferase ptmD. A two-step elimination (acetylation and elimination) process performed by the O-acetyltransferase ptmV and ptmI leads to the production of the prenylated form of penijanthine. The FAD-linked oxidoreductase ptmO then converts the prenylated form of penijanthine into PC-M5 which is in turn transformed into PC-M4 by the aromatic dimethylallyltransferase ptmE. Five sequential oxidative transformations performed by the cytochrome P450 monooxygenases ptmK, ptmU, ptmL, ptmN and ptmJ yield the various penitrem compounds. PtmK, ptmU and ptmM are involved in the formation of the key bicyclic ring of penitrem C via the formation of the intermediates secopenitrem D and penitrem D. PtmL catalyzes the epoxidation of penitrem D and C to yield penitrem B and F, respectively. PtmJ catalyzes the last benzylic hydroxylation to convert penitrem B to prenitrem E and penitrem F to penitrem A. This Penicillium ochrochloron protein is Prenyl transferase ptmC.